Reading from the N-terminus, the 528-residue chain is Galactokinase (528 aa).

Alpha-D-galactose is bound by residues Arg-53, Glu-59, His-60, and Asp-62. 4 residues coordinate ATP: Gly-165, Gly-167, Ser-169, and Ser-170. Asn-213 and Asp-217 together coordinate alpha-D-galactose. The active-site Proton acceptor is Asp-217. 3 residues coordinate ATP: Ser-264, Asn-265, and Lys-266. Tyr-274 serves as a coordination point for alpha-D-galactose. Ser-381 carries the phosphoserine modification.

It belongs to the GHMP kinase family. GalK subfamily.

The enzyme catalyses alpha-D-galactose + ATP = alpha-D-galactose 1-phosphate + ADP + H(+). Its pathway is carbohydrate metabolism; galactose metabolism. Functionally, galactokinase is a key enzyme in the galactose metabolism where it catalyzes the conversion of alpha-D-galactose to galactose 1-phosphate. Can also induce the transcription of the yeast GAL genes in response to the organism being challenged with galactose as the sole source of carbon. It's striking amino acid sequence similarity to GAL3 might explain its GAL3-like induction activity. This Saccharomyces cerevisiae (strain ATCC 204508 / S288c) (Baker's yeast) protein is Galactokinase.